Here is a 181-residue protein sequence, read N- to C-terminus: Large ribosomal subunit protein uL6 (181 aa).

The protein belongs to the universal ribosomal protein uL6 family. In terms of assembly, part of the 50S ribosomal subunit.

Its function is as follows. This protein binds to the 23S rRNA, and is important in its secondary structure. It is located near the subunit interface in the base of the L7/L12 stalk, and near the tRNA binding site of the peptidyltransferase center. This is Large ribosomal subunit protein uL6 from Synechococcus sp. (strain JA-3-3Ab) (Cyanobacteria bacterium Yellowstone A-Prime).